A 101-amino-acid chain; its full sequence is Capsid assembly scaffolding protein (101 aa).

A disordered region spans residues 1–24 (MPMERDSHEEILNKLNDPELEHSE). The stretch at 79-99 (EEIKQEELSETITIEDLEKQA) forms a coiled coil.

Belongs to the phi29likevirus scaffolding protein family. As to quaternary structure, homodimer. Interacts non-specifically with DNA; probably binds DNA in the early stages of DNA packaging.

In terms of biological role, scaffolding protein involved in the icosahedric procapsid assembly. Coassembles with the capsid proteins to form the procapsid. The scaffolding protein is found within the capsid as a serie of concentric shells. During DNA packaging, the scaffolding protein molecules are released from the procapsid. In Bacillus subtilis (Bacteriophage B103), this protein is Capsid assembly scaffolding protein (7).